The chain runs to 511 residues: Bifunctional purine biosynthesis protein PurH (511 aa).

One can recognise an MGS-like domain in the interval 1 to 145 (MKRRALVSVS…KNHQHVTVVV (145 aa)).

The protein belongs to the PurH family.

It catalyses the reaction (6R)-10-formyltetrahydrofolate + 5-amino-1-(5-phospho-beta-D-ribosyl)imidazole-4-carboxamide = 5-formamido-1-(5-phospho-D-ribosyl)imidazole-4-carboxamide + (6S)-5,6,7,8-tetrahydrofolate. The enzyme catalyses IMP + H2O = 5-formamido-1-(5-phospho-D-ribosyl)imidazole-4-carboxamide. It functions in the pathway purine metabolism; IMP biosynthesis via de novo pathway; 5-formamido-1-(5-phospho-D-ribosyl)imidazole-4-carboxamide from 5-amino-1-(5-phospho-D-ribosyl)imidazole-4-carboxamide (10-formyl THF route): step 1/1. Its pathway is purine metabolism; IMP biosynthesis via de novo pathway; IMP from 5-formamido-1-(5-phospho-D-ribosyl)imidazole-4-carboxamide: step 1/1. The sequence is that of Bifunctional purine biosynthesis protein PurH from Halalkalibacterium halodurans (strain ATCC BAA-125 / DSM 18197 / FERM 7344 / JCM 9153 / C-125) (Bacillus halodurans).